A 661-amino-acid chain; its full sequence is Threonine--tRNA ligase (661 aa).

In terms of domain architecture, TGS spans M1–R64. The tract at residues D245–P547 is catalytic. The Zn(2+) site is built by C341, H392, and H524.

Belongs to the class-II aminoacyl-tRNA synthetase family. In terms of assembly, homodimer. Zn(2+) serves as cofactor.

It localises to the cytoplasm. The enzyme catalyses tRNA(Thr) + L-threonine + ATP = L-threonyl-tRNA(Thr) + AMP + diphosphate + H(+). Functionally, catalyzes the attachment of threonine to tRNA(Thr) in a two-step reaction: L-threonine is first activated by ATP to form Thr-AMP and then transferred to the acceptor end of tRNA(Thr). Also edits incorrectly charged L-seryl-tRNA(Thr). The sequence is that of Threonine--tRNA ligase from Sinorhizobium fredii (strain NBRC 101917 / NGR234).